Consider the following 131-residue polypeptide: Holo-[acyl-carrier-protein] synthase (131 aa).

Positions 8 and 63 each coordinate Mg(2+).

It belongs to the P-Pant transferase superfamily. AcpS family. Mg(2+) is required as a cofactor.

The protein localises to the cytoplasm. It catalyses the reaction apo-[ACP] + CoA = holo-[ACP] + adenosine 3',5'-bisphosphate + H(+). In terms of biological role, transfers the 4'-phosphopantetheine moiety from coenzyme A to a Ser of acyl-carrier-protein. The polypeptide is Holo-[acyl-carrier-protein] synthase (Shewanella piezotolerans (strain WP3 / JCM 13877)).